The sequence spans 476 residues: FAD-dependent monooxygenase dpasE (476 aa).

A signal peptide spans Met1–Ala21. FAD-binding residues include Glu35, Ala49, and Arg109. Residues Asn190 and Asn219 are each glycosylated (N-linked (GlcNAc...) asparagine). FAD contacts are provided by Asp308 and Ala321. A helical membrane pass occupies residues Gly441 to Met461.

It belongs to the paxM FAD-dependent monooxygenase family. Requires FAD as cofactor.

The protein localises to the membrane. Its pathway is secondary metabolite biosynthesis; terpenoid biosynthesis. Its function is as follows. FAD-dependent monooxygenase; part of the gene cluster that mediates the biosynthesis of the diterpenoid pyrones subglutinols A and B. The first step of the pathway is the synthesis of the alpha-pyrone moiety by the polyketide synthase dpasA via condensation of one acetyl-CoA starter unit with 3 malonyl-CoA units and 2 methylations. The alpha-pyrone is then combined with geranylgeranyl pyrophosphate (GGPP) formed by the GGPP synthase dpasD through the action of the prenyltransferase dpasC to yield a linear alpha-pyrone diterpenoid. Subsequent steps in the diterpenoid pyrone biosynthetic pathway involve the decalin core formation, which is initiated by the epoxidation of the C10-C11 olefin by the FAD-dependent oxidoreductase dpasE, and is followed by a cyclization cascade catalyzed by the terpene cyclase dpasB. The FAD-linked oxidoreductase dpasF is then involved in tetrahydrofuran (THF) ring formation at the C5 unit to complete the formation of subglutinols A and B. DpasF possesses also an additional catalytic ability of multi-step oxidations to generate a new DDP analog with an enone system at the C5 named FDDP A. The chain is FAD-dependent monooxygenase dpasE from Apiospora sacchari (Arthrinium sacchari).